Consider the following 166-residue polypeptide: MRGINPVLFKISFLLIILVSLILSLFYYNFLFAFLLSFILFGITWAYCYIKIESTDKGKLLYEIKRPGIETLRFLFILMIISVFIKSLLHSNSFFPYISFLLSNLILGLVLFDDYILGNPTIKFYEKGVVFDRVAFYNWEELDIKEDEGYLKIKIKYYPKEIMYKK.

The next 4 helical transmembrane spans lie at 7–27 (VLFK…SLFY), 30–50 (FLFA…YCYI), 69–89 (IETL…KSLL), and 92–112 (NSFF…LVLF).

The protein to M.jannaschii MJ0795.1 and MJ0785.1.

The protein localises to the cell membrane. This is an uncharacterized protein from Methanocaldococcus jannaschii (strain ATCC 43067 / DSM 2661 / JAL-1 / JCM 10045 / NBRC 100440) (Methanococcus jannaschii).